The sequence spans 505 residues: Geissoschizine oxidase (505 aa).

Residues phenylalanine 9–isoleucine 29 traverse the membrane as a helical segment. Residue cysteine 443 coordinates heme.

It belongs to the cytochrome P450 family. Heme serves as cofactor. As to expression, mainly expressed in roots.

Its subcellular location is the membrane. It carries out the reaction (19E)-geissoschizine + reduced [NADPH--hemoprotein reductase] + O2 = akuammicine + formate + oxidized [NADPH--hemoprotein reductase] + H2O + H(+). The catalysed reaction is (19E)-geissoschizine + reduced [NADPH--hemoprotein reductase] + O2 = 3,17-didehydrostemmadenine + oxidized [NADPH--hemoprotein reductase] + 2 H2O. The enzyme catalyses 3,17-didehydrostemmadenine = 17-dehydropreakuammicine. Its pathway is alkaloid biosynthesis. In terms of biological role, monooxygenase involved in the biosynthesis of curare monoterpene indole alkaloids (MIAs), natural products such as strychnine, a neurotoxic compound used as a pesticide to control rodents, and its pharmacologically active derivatives, including brucine, used to regulate blood pressure. Curare alkaloids act as animal glycine receptor antagonists. Catalyzes the conversion of geissoschizine to dehydropreakuammicine by cyclization, which is spontaneously converted into akuammicine by aromatization. This Strychnos nux-vomica (Poison nut) protein is Geissoschizine oxidase.